Reading from the N-terminus, the 174-residue chain is Endoribonuclease YbeY (174 aa).

Zn(2+)-binding residues include histidine 133, histidine 137, and histidine 143.

It belongs to the endoribonuclease YbeY family. The cofactor is Zn(2+).

Its subcellular location is the cytoplasm. Its function is as follows. Single strand-specific metallo-endoribonuclease involved in late-stage 70S ribosome quality control and in maturation of the 3' terminus of the 16S rRNA. This Paracoccus denitrificans (strain Pd 1222) protein is Endoribonuclease YbeY.